Consider the following 214-residue polypeptide: Holliday junction branch migration complex subunit RuvA (214 aa).

The interval 1 to 63 is domain I; that stretch reads MISFLRGTVA…EDSLTLFGFS (63 aa). Residues 64 to 142 are domain II; the sequence is SDDEREVFDV…PHGTGAAAAP (79 aa). Residues 143–153 are flexible linker; the sequence is AAAASAPWKPQ. Positions 153–214 are domain III; that stretch reads QVVAAMTSLG…RAGNRVGSRG (62 aa).

It belongs to the RuvA family. As to quaternary structure, homotetramer. Forms an RuvA(8)-RuvB(12)-Holliday junction (HJ) complex. HJ DNA is sandwiched between 2 RuvA tetramers; dsDNA enters through RuvA and exits via RuvB. An RuvB hexamer assembles on each DNA strand where it exits the tetramer. Each RuvB hexamer is contacted by two RuvA subunits (via domain III) on 2 adjacent RuvB subunits; this complex drives branch migration. In the full resolvosome a probable DNA-RuvA(4)-RuvB(12)-RuvC(2) complex forms which resolves the HJ.

The protein localises to the cytoplasm. Its function is as follows. The RuvA-RuvB-RuvC complex processes Holliday junction (HJ) DNA during genetic recombination and DNA repair, while the RuvA-RuvB complex plays an important role in the rescue of blocked DNA replication forks via replication fork reversal (RFR). RuvA specifically binds to HJ cruciform DNA, conferring on it an open structure. The RuvB hexamer acts as an ATP-dependent pump, pulling dsDNA into and through the RuvAB complex. HJ branch migration allows RuvC to scan DNA until it finds its consensus sequence, where it cleaves and resolves the cruciform DNA. The protein is Holliday junction branch migration complex subunit RuvA of Arthrobacter sp. (strain FB24).